Consider the following 423-residue polypeptide: NADH-quinone oxidoreductase subunit F (423 aa).

54 to 63 (GRGGAGFSTG) contributes to the NAD(+) binding site. 166–213 (GAGAYICGEETALLESLEGKKGMPRLKPPFPAGFGLYGCPTTINNVES) contacts FMN. [4Fe-4S] cluster is bound by residues C344, C347, C350, and C390.

Belongs to the complex I 51 kDa subunit family. FMN serves as cofactor. It depends on [4Fe-4S] cluster as a cofactor.

It carries out the reaction a quinone + NADH + 5 H(+)(in) = a quinol + NAD(+) + 4 H(+)(out). Functionally, NDH-1 shuttles electrons from NADH, via FMN and iron-sulfur (Fe-S) centers, to quinones in the respiratory chain. Couples the redox reaction to proton translocation (for every two electrons transferred, four hydrogen ions are translocated across the cytoplasmic membrane), and thus conserves the redox energy in a proton gradient. This chain is NADH-quinone oxidoreductase subunit F (nuoF), found in Rickettsia akari (strain Hartford).